A 196-amino-acid chain; its full sequence is Holliday junction branch migration complex subunit RuvA (196 aa).

The segment at 1 to 63 (MYDYIKGTLV…DDAHLLFGFH (63 aa)) is domain I. Residues 64–142 (TEDEKEVFLK…ELPAETTNTT (79 aa)) are domain II. Residues 143 to 146 (ANQT) are flexible linker. Residues 147-196 (AGNQQLDEAMEALLALGYKATELKKVKAFFEDTNETAEQYIKSALKMLMK) form a domain III region.

It belongs to the RuvA family. As to quaternary structure, homotetramer. Forms an RuvA(8)-RuvB(12)-Holliday junction (HJ) complex. HJ DNA is sandwiched between 2 RuvA tetramers; dsDNA enters through RuvA and exits via RuvB. An RuvB hexamer assembles on each DNA strand where it exits the tetramer. Each RuvB hexamer is contacted by two RuvA subunits (via domain III) on 2 adjacent RuvB subunits; this complex drives branch migration. In the full resolvosome a probable DNA-RuvA(4)-RuvB(12)-RuvC(2) complex forms which resolves the HJ.

Its subcellular location is the cytoplasm. The RuvA-RuvB-RuvC complex processes Holliday junction (HJ) DNA during genetic recombination and DNA repair, while the RuvA-RuvB complex plays an important role in the rescue of blocked DNA replication forks via replication fork reversal (RFR). RuvA specifically binds to HJ cruciform DNA, conferring on it an open structure. The RuvB hexamer acts as an ATP-dependent pump, pulling dsDNA into and through the RuvAB complex. HJ branch migration allows RuvC to scan DNA until it finds its consensus sequence, where it cleaves and resolves the cruciform DNA. This is Holliday junction branch migration complex subunit RuvA from Streptococcus thermophilus (strain ATCC BAA-491 / LMD-9).